The following is a 294-amino-acid chain: Elongation factor Ts (294 aa).

Residues 78-81 (TDFV) are involved in Mg(2+) ion dislocation from EF-Tu.

It belongs to the EF-Ts family.

It localises to the cytoplasm. In terms of biological role, associates with the EF-Tu.GDP complex and induces the exchange of GDP to GTP. It remains bound to the aminoacyl-tRNA.EF-Tu.GTP complex up to the GTP hydrolysis stage on the ribosome. The sequence is that of Elongation factor Ts from Mycoplasma mobile (strain ATCC 43663 / 163K / NCTC 11711) (Mesomycoplasma mobile).